Consider the following 423-residue polypeptide: Serine--tRNA ligase (423 aa).

Position 231-233 (231-233) interacts with L-serine; that stretch reads TAE. 262-264 serves as a coordination point for ATP; it reads RSE. Residue Glu285 participates in L-serine binding. 349 to 352 is a binding site for ATP; the sequence is EIGS. L-serine is bound at residue Ser385.

This sequence belongs to the class-II aminoacyl-tRNA synthetase family. Type-1 seryl-tRNA synthetase subfamily. Homodimer. The tRNA molecule binds across the dimer.

It localises to the cytoplasm. The enzyme catalyses tRNA(Ser) + L-serine + ATP = L-seryl-tRNA(Ser) + AMP + diphosphate + H(+). The catalysed reaction is tRNA(Sec) + L-serine + ATP = L-seryl-tRNA(Sec) + AMP + diphosphate + H(+). The protein operates within aminoacyl-tRNA biosynthesis; selenocysteinyl-tRNA(Sec) biosynthesis; L-seryl-tRNA(Sec) from L-serine and tRNA(Sec): step 1/1. Catalyzes the attachment of serine to tRNA(Ser). Is also able to aminoacylate tRNA(Sec) with serine, to form the misacylated tRNA L-seryl-tRNA(Sec), which will be further converted into selenocysteinyl-tRNA(Sec). The protein is Serine--tRNA ligase of Acholeplasma laidlawii (strain PG-8A).